The chain runs to 102 residues: Small ribosomal subunit protein uS10 (102 aa).

Belongs to the universal ribosomal protein uS10 family. Part of the 30S ribosomal subunit.

Functionally, involved in the binding of tRNA to the ribosomes. In Bifidobacterium animalis subsp. lactis (strain AD011), this protein is Small ribosomal subunit protein uS10.